We begin with the raw amino-acid sequence, 589 residues long: 2-succinyl-5-enolpyruvyl-6-hydroxy-3-cyclohexene-1-carboxylate synthase (589 aa).

The tract at residues 198–222 (DAATTEGAHDSHAPSQPTRGPRKLP) is disordered.

Belongs to the TPP enzyme family. MenD subfamily. In terms of assembly, homodimer. Requires Mg(2+) as cofactor. Mn(2+) serves as cofactor. The cofactor is thiamine diphosphate.

The catalysed reaction is isochorismate + 2-oxoglutarate + H(+) = 5-enolpyruvoyl-6-hydroxy-2-succinyl-cyclohex-3-ene-1-carboxylate + CO2. The protein operates within quinol/quinone metabolism; 1,4-dihydroxy-2-naphthoate biosynthesis; 1,4-dihydroxy-2-naphthoate from chorismate: step 2/7. It functions in the pathway quinol/quinone metabolism; menaquinone biosynthesis. In terms of biological role, catalyzes the thiamine diphosphate-dependent decarboxylation of 2-oxoglutarate and the subsequent addition of the resulting succinic semialdehyde-thiamine pyrophosphate anion to isochorismate to yield 2-succinyl-5-enolpyruvyl-6-hydroxy-3-cyclohexene-1-carboxylate (SEPHCHC). This chain is 2-succinyl-5-enolpyruvyl-6-hydroxy-3-cyclohexene-1-carboxylate synthase, found in Corynebacterium jeikeium (strain K411).